Here is a 266-residue protein sequence, read N- to C-terminus: Tryptophan synthase alpha chain (266 aa).

Catalysis depends on proton acceptor residues Glu-49 and Asp-60.

Belongs to the TrpA family. Tetramer of two alpha and two beta chains.

The catalysed reaction is (1S,2R)-1-C-(indol-3-yl)glycerol 3-phosphate + L-serine = D-glyceraldehyde 3-phosphate + L-tryptophan + H2O. It functions in the pathway amino-acid biosynthesis; L-tryptophan biosynthesis; L-tryptophan from chorismate: step 5/5. Functionally, the alpha subunit is responsible for the aldol cleavage of indoleglycerol phosphate to indole and glyceraldehyde 3-phosphate. The polypeptide is Tryptophan synthase alpha chain (Trichormus variabilis (strain ATCC 29413 / PCC 7937) (Anabaena variabilis)).